Consider the following 526-residue polypeptide: MSVEVEYLQHEDYLYRTSKLKEIRDLGINPYPYQYTDCLEVQEIRNQFVDNELGDSEAAFRKETPKVRFAGRLVLFRSMGKNSFGQILDNDAKIQVMFNRDFSAVAGLAADAGISPIKFIEKKLDLGDILGLEGYLFFTHSGELTVLVETVTLLCKSLISLPDKHAGLADKEIRYRKRWADLISSEDVRKTFLTRSRILKLIREYMDQQSFLEVETPILQTIYGGAEATPFVTTLQALHAEMFLRISLEIALKKLLVGGMSRVYEIGKVFRNEGIDRTHNPEFTMIEAYAAYWDYNDVMKCVENLVEYIVRALNNGETQVQYSHLKSGPQVVDFKAPWIRMTMKESISVYGGVDVDLHADHELRKILETQTSLPEKTYVHASRGELIALLFDELVCDKLIAPHHITDHPLETTPLCKTLRSGDETLVERFESFCLGKELCNAYSELNDPLQQRKLLEEQMRKKALNPDSEYHPIDEEFLEALCQGMPPAGGFGIGIDRLVMMLTDAASIRDVLFFPVMRRIEAKKD.

Residues glutamate 431 and glutamate 438 each coordinate Mg(2+).

This sequence belongs to the class-II aminoacyl-tRNA synthetase family. As to quaternary structure, homodimer. Mg(2+) is required as a cofactor.

It localises to the cytoplasm. It carries out the reaction tRNA(Lys) + L-lysine + ATP = L-lysyl-tRNA(Lys) + AMP + diphosphate. The chain is Lysine--tRNA ligase (lysS) from Chlamydia trachomatis serovar D (strain ATCC VR-885 / DSM 19411 / UW-3/Cx).